Reading from the N-terminus, the 492-residue chain is uncharacterized protein (492 aa).

13 helical membrane passes run Val67–Leu87, Ala88–Gly108, Ile110–Val130, Gly157–Gly177, Tyr185–Leu205, Ile232–Ile252, Phe255–Phe275, Leu294–Val314, Trp333–Trp353, Phe367–Gln387, Leu392–Leu412, Ser434–Phe454, and Gly464–Ile484.

The protein belongs to the major facilitator superfamily. Proton-dependent oligopeptide transporter (POT/PTR) (TC 2.A.17) family.

It localises to the cell membrane. This is an uncharacterized protein from Bacillus subtilis (strain 168).